We begin with the raw amino-acid sequence, 439 residues long: MGVANDSSPEYQWMSPHRLSDTVILGDCLYFNNIMSQLDLHQNWAPSVRLLNYFKNFNRETLLKIEENDYINSSFFQQKDKRFYPINDDFYHISTGGYGIVFKIDNYVVKFVFEATKLYSPMETTAEFTVPKFLYNNLKGDEKKLIVCALAMGLNYKLTFLHTLYKRVLNMLLLLIQTMDGQELSLRYSSKVFLKAFNERKDSIKFVKLLSHFYPAVINSNINVINYFNRMFHFFEHEKRTNYEYERGNIIIFPLALYSADKVDTELAIKLGFKSLVQYIKFIFLQMALLYIKIYELPRCDNFLHADLKPDNILLFDSNEPIIIHLKDKKFVFNERIKSALNDFDFSQVAGIINKKIKNNFKVEHNWYYDFHFFVHTLLKTYPEIEKDIEFSTALEEFIMCTKTDCDKYRLKVSILHPISFLEKFIMRDIFSDWINGRN.

Positions 87 to 439 constitute a Protein kinase domain; that stretch reads NDDFYHISTG…IFSDWINGRN (353 aa). Residues 93 to 101 and lysine 117 contribute to the ATP site; that span reads ISTGGYGIV. Aspartate 307 functions as the Proton acceptor in the catalytic mechanism.

This sequence belongs to the protein kinase superfamily. Ser/Thr protein kinase family. Poxviruses subfamily. In terms of processing, phosphorylated in vivo. Autophosphorylated in vitro.

The protein resides in the host endoplasmic reticulum. The protein localises to the host endoplasmic reticulum-Golgi intermediate compartment. It carries out the reaction L-seryl-[protein] + ATP = O-phospho-L-seryl-[protein] + ADP + H(+). It catalyses the reaction L-threonyl-[protein] + ATP = O-phospho-L-threonyl-[protein] + ADP + H(+). Essential serine-protein kinase involved in the early stage of virion morphogenesis. The sequence is that of Serine/threonine-protein kinase 2 (OPG054) from Homo sapiens (Human).